Here is a 274-residue protein sequence, read N- to C-terminus: Tropomyosin (274 aa).

The interval 1–30 (MKLEKDNAMDRADTLEQQNKEANIRAEKAE) is disordered. The stretch at 1–274 (MKLEKDNAMD…DQTFSELSGY (274 aa)) forms a coiled coil.

This sequence belongs to the tropomyosin family. Homodimer.

Its function is as follows. Tropomyosin, in association with the troponin complex, plays a central role in the calcium dependent regulation of muscle contraction. The polypeptide is Tropomyosin (Panulirus stimpsoni (Chinese spiny lobster)).